The following is a 393-amino-acid chain: L-methionine gamma-lyase (393 aa).

Pyridoxal 5'-phosphate contacts are provided by residues 63-65 and 93-94; these read YQR and GM. Tyrosine 119 serves as a coordination point for L-homocysteine. Residue 206–208 coordinates pyridoxal 5'-phosphate; it reads SAT. An N6-(pyridoxal phosphate)lysine modification is found at lysine 209. Arginine 367 contacts L-homocysteine. Residue arginine 367 participates in L-methionine binding.

It belongs to the trans-sulfuration enzymes family. L-methionine gamma-lyase subfamily. Homotetramer. It depends on pyridoxal 5'-phosphate as a cofactor.

It carries out the reaction L-methionine + H2O = methanethiol + 2-oxobutanoate + NH4(+). It catalyses the reaction L-homocysteine + H2O = 2-oxobutanoate + hydrogen sulfide + NH4(+) + H(+). Its function is as follows. Catalyzes the alpha,gamma-elimination of L-methionine to produce methanethiol, 2-oxobutanoate and ammonia. Is also able to catalyze the alpha,gamma-elimination of L-homocysteine. In Brevibacterium sandarakinum, this protein is L-methionine gamma-lyase.